The primary structure comprises 1116 residues: DUB-associated factor 1 (1116 aa).

WD repeat units follow at residues 21–62, 91–132, 160–200, 219–262, 266–305, 387–426, and 428–466; these read AHIL…NEPE, KNSD…DHDD, VHDG…EKMA, SMSP…EVIR, AHRT…DQTT, KKYG…FSVN, and GGFA…LLNT. The tract at residues 578–600 is disordered; that stretch reads LDTGYNSESKKNNKDKKRKSTFK. Ser-668 is modified (phosphoserine). Phosphothreonine is present on Thr-693. Positions 747 to 776 are enriched in polar residues; it reads ISSQDLPSNNTHNKLRSSENSRANSTSTLE. Disordered stretches follow at residues 747–784 and 963–994; these read ISSQ…KKPE and FISA…PSTQ. Low complexity predominate over residues 967 to 987; sequence SDTTESSGNDSSDSSLGNGNE.

As to quaternary structure, interacts (via its WD repeats) with ubiquitin.

It is found in the cytoplasm. Ubiquitin-binding protein involved in the resistance to phenanthroline, sanguinarine, nordihydroguaiaretic acid (NDGA), isopropyl (N-3-chloro-phenyl)-carbamate (IPCPC) and guanosine 5'-O-(2-thiodiphosphate). The protein is DUB-associated factor 1 of Saccharomyces cerevisiae (strain ATCC 204508 / S288c) (Baker's yeast).